Consider the following 454-residue polypeptide: Cobyrinate a,c-diamide synthase (454 aa).

Residues 244-440 form the GATase cobBQ-type domain; that stretch reads RLGIAKDKAF…LHVHFYQNPK (197 aa). The active-site Nucleophile is the Cys326.

It belongs to the CobB/CbiA family. The cofactor is Mg(2+).

It carries out the reaction cob(II)yrinate + 2 L-glutamine + 2 ATP + 2 H2O = cob(II)yrinate a,c diamide + 2 L-glutamate + 2 ADP + 2 phosphate + 2 H(+). It participates in cofactor biosynthesis; adenosylcobalamin biosynthesis; cob(II)yrinate a,c-diamide from sirohydrochlorin (anaerobic route): step 10/10. In terms of biological role, catalyzes the ATP-dependent amidation of the two carboxylate groups at positions a and c of cobyrinate, using either L-glutamine or ammonia as the nitrogen source. The chain is Cobyrinate a,c-diamide synthase from Limosilactobacillus reuteri subsp. reuteri (strain JCM 1112) (Lactobacillus reuteri).